Reading from the N-terminus, the 356-residue chain is Inositol phosphoceramide mannosyltransferase 3 (356 aa).

Residues 4 to 24 traverse the membrane as a helical segment; the sequence is ILFYFFFFLTLILSATVYLFG. N-linked (GlcNAc...) asparagine glycans are attached at residues N52 and N146. A run of 2 helical transmembrane segments spans residues 197-217 and 269-289; these read FPYLTVMYSTGPLFLSIIWSA and WAIFTFLGFLTFFIVVYFIFG. Residues S307, S353, and S355 each carry the phosphoserine modification.

It belongs to the glycosyltransferase 32 family.

The protein localises to the endoplasmic reticulum membrane. The protein resides in the golgi apparatus. It localises to the cis-Golgi network membrane. It is found in the trans-Golgi network membrane. Functionally, with imt1 and imt2, is required for the synthesis of mannosylinositol phosphoceramide (MIPC). Catalyzes the addition of mannosyl to inositol phosphoceramide (IPC). MIPC is essential for cell morphology, cell-surface distribution of ergosterol, localization for plasma-membrane transporters, and lipid-raft-mediated endocytosis of plasma membrane proteins to the vacuole. In Schizosaccharomyces pombe (strain 972 / ATCC 24843) (Fission yeast), this protein is Inositol phosphoceramide mannosyltransferase 3.